A 400-amino-acid polypeptide reads, in one-letter code: uncharacterized protein (400 aa).

An N-terminal signal peptide occupies residues Met1–Gly31.

This sequence belongs to the bacterial solute-binding protein 1 family. WtpA subfamily.

This is an uncharacterized protein from Thermoplasma acidophilum (strain ATCC 25905 / DSM 1728 / JCM 9062 / NBRC 15155 / AMRC-C165).